Consider the following 484-residue polypeptide: UDP-N-acetylmuramoyl-L-alanyl-D-glutamate--2,6-diaminopimelate ligase (484 aa).

110-116 (GTNGKTT) provides a ligand contact to ATP. UDP-N-acetyl-alpha-D-muramoyl-L-alanyl-D-glutamate contacts are provided by residues 152–153 (TT), serine 179, and arginine 187. Lysine 219 carries the post-translational modification N6-carboxylysine. Meso-2,6-diaminopimelate contacts are provided by residues arginine 381, 405-408 (DNPR), glycine 455, and glutamate 459. A Meso-diaminopimelate recognition motif motif is present at residues 405-408 (DNPR).

It belongs to the MurCDEF family. MurE subfamily. Mg(2+) is required as a cofactor. Carboxylation is probably crucial for Mg(2+) binding and, consequently, for the gamma-phosphate positioning of ATP.

It is found in the cytoplasm. It carries out the reaction UDP-N-acetyl-alpha-D-muramoyl-L-alanyl-D-glutamate + meso-2,6-diaminopimelate + ATP = UDP-N-acetyl-alpha-D-muramoyl-L-alanyl-gamma-D-glutamyl-meso-2,6-diaminopimelate + ADP + phosphate + H(+). The protein operates within cell wall biogenesis; peptidoglycan biosynthesis. In terms of biological role, catalyzes the addition of meso-diaminopimelic acid to the nucleotide precursor UDP-N-acetylmuramoyl-L-alanyl-D-glutamate (UMAG) in the biosynthesis of bacterial cell-wall peptidoglycan. The sequence is that of UDP-N-acetylmuramoyl-L-alanyl-D-glutamate--2,6-diaminopimelate ligase from Clostridium perfringens (strain 13 / Type A).